The chain runs to 187 residues: MKNQNTRVEEGIRMELNIDRIRIFEGDIVKMRVDAIVNAANNTLLGGGGVDGAIHRAAGPALLEECKTLNGCPTGEAKITSGYLLPAKYIIHTVGPVWQGGEKGEDELLASCYRKSLELARDYKIKTIAFPAISTGAYGFPSERAAGIAVSQVKEFLQKNEIPETVYLVCYNKDSCKSIKKALSKIL.

The region spanning valine 8–leucine 187 is the Macro domain.

The protein belongs to the MacroD-type family.

This Methanosarcina mazei (strain ATCC BAA-159 / DSM 3647 / Goe1 / Go1 / JCM 11833 / OCM 88) (Methanosarcina frisia) protein is Macro domain-containing protein MM_0177.